Consider the following 329-residue polypeptide: Biotin synthase (329 aa).

In terms of domain architecture, Radical SAM core spans 38-262 (NTIQVSTLLS…IMPYSYIRLS (225 aa)). The [4Fe-4S] cluster site is built by Cys-53, Cys-57, and Cys-60. Cys-97, Cys-128, Cys-188, and Arg-260 together coordinate [2Fe-2S] cluster.

The protein belongs to the radical SAM superfamily. Biotin synthase family. As to quaternary structure, homodimer. Requires [4Fe-4S] cluster as cofactor. The cofactor is [2Fe-2S] cluster.

It carries out the reaction (4R,5S)-dethiobiotin + (sulfur carrier)-SH + 2 reduced [2Fe-2S]-[ferredoxin] + 2 S-adenosyl-L-methionine = (sulfur carrier)-H + biotin + 2 5'-deoxyadenosine + 2 L-methionine + 2 oxidized [2Fe-2S]-[ferredoxin]. Its pathway is cofactor biosynthesis; biotin biosynthesis; biotin from 7,8-diaminononanoate: step 2/2. Its function is as follows. Catalyzes the conversion of dethiobiotin (DTB) to biotin by the insertion of a sulfur atom into dethiobiotin via a radical-based mechanism. The chain is Biotin synthase from Acinetobacter baylyi (strain ATCC 33305 / BD413 / ADP1).